Here is a 321-residue protein sequence, read N- to C-terminus: tRNA(Ile)-lysidine synthase (321 aa).

Ser-30–Ser-35 lines the ATP pocket.

The protein belongs to the tRNA(Ile)-lysidine synthase family.

Its subcellular location is the cytoplasm. It catalyses the reaction cytidine(34) in tRNA(Ile2) + L-lysine + ATP = lysidine(34) in tRNA(Ile2) + AMP + diphosphate + H(+). Functionally, ligates lysine onto the cytidine present at position 34 of the AUA codon-specific tRNA(Ile) that contains the anticodon CAU, in an ATP-dependent manner. Cytidine is converted to lysidine, thus changing the amino acid specificity of the tRNA from methionine to isoleucine. This Chlamydia trachomatis serovar D (strain ATCC VR-885 / DSM 19411 / UW-3/Cx) protein is tRNA(Ile)-lysidine synthase.